Reading from the N-terminus, the 141-residue chain is MLTAEDKKLITQLWEKVAGHQEEFGSEALQRMFLAYPQTKTYFPHFDLHPGSEQVRGHGKKVAAALGNAVKSLDNLSQALSELSNLHAYNLRVDPVNFKLLAQCFQVVLAAHLGKDYSPEMHAAFDKFMSAVAAVLAEKYR.

The 141-residue stretch at 1 to 141 (MLTAEDKKLI…VAAVLAEKYR (141 aa)) folds into the Globin domain. Heme b contacts are provided by H58 and H87.

It belongs to the globin family. Heterotetramer of two alpha-D chains and two beta chains. As to expression, red blood cells.

Involved in oxygen transport from the lung to the various peripheral tissues. This Anas platyrhynchos (Mallard) protein is Hemoglobin subunit alpha-D (HBAD).